The sequence spans 328 residues: MSDTQISSFLRKYLADEDRKIRAQFKESDPKNKLILWMHEKTRITEDDLKRPYTKDEVRELCLRTKVKVDMTAWNCLWEAKKRFDAKGRFENKSEKFINRMYMKAVRRKMVQPYPEEYVAQRREVIAAETKKFNISRLDRWQKQKSQNRSAPESSSALVGHASQQDSQDNEAVETHEDQANTNRYSVSQMEPMARPVVSASDLSGIGDDEDEQQQQQSEFQTEHTDCPETQMRCDQINSGSLPMGLTNSESAPDYYMFGTQLSTSVRPTSTQEADDQIACPETETNESWVRCDQINSESMSIGPSIDSEGNISLQNSGSEPIDVDSMA.

Positions 107–320 (RRKMVQPYPE…NISLQNSGSE (214 aa)) are required for binding to Su(var)205. The segment at 139-228 (DRWQKQKSQN…EFQTEHTDCP (90 aa)) is disordered. 2 stretches are compositionally biased toward polar residues: residues 144 to 167 (QKSQ…QQDS) and 180 to 189 (ANTNRYSVSQ). 2 short sequence motifs (su(var)205-binding Pro-containing repeat) span residues 228–232 (PETQM) and 281–287 (PETETNE). A compositionally biased stretch (polar residues) spans 295–319 (INSESMSIGPSIDSEGNISLQNSGS). Positions 295-328 (INSESMSIGPSIDSEGNISLQNSGSEPIDVDSMA) are disordered.

Interacts (via C-terminus) with Su(var)205 dimer (via hinge and chromoshadow domain) and with moi to form the terminin, telomere-capping, complex. Interacts with HP6, which is also part of the terminin complex.

The protein localises to the nucleus. It is found in the chromosome. Its subcellular location is the telomere. In terms of biological role, binds to chromosome ends in a sequence-dependent manner and is required for telomere capping. In Drosophila erecta (Fruit fly), this protein is Telomere-binding protein cav.